Consider the following 204-residue polypeptide: MLRVALAKGRLLKSFIEYLQQVNQIDIATVLLNRQRQLLLTVDNIEMILVKGSDVPTYVEQGIADVGIVGSDILNGQKYNINKLLDLPFGKCHFALAAKPETSRYKKVATSYVHTATQFFNKEGMDVEVIHLNGSVELSCVVDMVDAIVDIVQTGSTLTANGLVEKKHISEINAKLITNKESYFKQSSEIERLIKQLGVSINYA.

Belongs to the ATP phosphoribosyltransferase family. Short subfamily. As to quaternary structure, heteromultimer composed of HisG and HisZ subunits.

It is found in the cytoplasm. The catalysed reaction is 1-(5-phospho-beta-D-ribosyl)-ATP + diphosphate = 5-phospho-alpha-D-ribose 1-diphosphate + ATP. It participates in amino-acid biosynthesis; L-histidine biosynthesis; L-histidine from 5-phospho-alpha-D-ribose 1-diphosphate: step 1/9. Its function is as follows. Catalyzes the condensation of ATP and 5-phosphoribose 1-diphosphate to form N'-(5'-phosphoribosyl)-ATP (PR-ATP). Has a crucial role in the pathway because the rate of histidine biosynthesis seems to be controlled primarily by regulation of HisG enzymatic activity. The chain is ATP phosphoribosyltransferase from Staphylococcus epidermidis (strain ATCC 35984 / DSM 28319 / BCRC 17069 / CCUG 31568 / BM 3577 / RP62A).